We begin with the raw amino-acid sequence, 156 residues long: Small ribosomal subunit protein uS7 (156 aa).

The protein belongs to the universal ribosomal protein uS7 family. In terms of assembly, part of the 30S ribosomal subunit. Contacts proteins S9 and S11.

Functionally, one of the primary rRNA binding proteins, it binds directly to 16S rRNA where it nucleates assembly of the head domain of the 30S subunit. Is located at the subunit interface close to the decoding center, probably blocks exit of the E-site tRNA. The sequence is that of Small ribosomal subunit protein uS7 from Acinetobacter baylyi (strain ATCC 33305 / BD413 / ADP1).